A 302-amino-acid chain; its full sequence is Transmembrane protein 191 (302 aa).

Residues 5 to 147 (QEQLLQLQKD…HLELAEAKFS (143 aa)) are a coiled coil. The segment at 39–66 (LTGRLEELRERERSLQRRRSQASRAIRG) is disordered. Over residues 42 to 53 (RLEELRERERSL) the composition is skewed to basic and acidic residues. A helical membrane pass occupies residues 242–262 (LQTLLLLPLGFLVLPLIYVVL).

It belongs to the TMEM191 family.

Its subcellular location is the membrane. The sequence is that of Transmembrane protein 191 from Mus musculus (Mouse).